The following is a 279-amino-acid chain: 3-methyl-2-oxobutanoate hydroxymethyltransferase (279 aa).

The Mg(2+) site is built by Asp-43 and Asp-82. Residues 43–44 (DS), Asp-82, and Lys-112 contribute to the 3-methyl-2-oxobutanoate site. Glu-114 provides a ligand contact to Mg(2+). Glu-181 serves as the catalytic Proton acceptor.

Belongs to the PanB family. In terms of assembly, homodecamer; pentamer of dimers. Mg(2+) serves as cofactor.

The protein localises to the cytoplasm. It carries out the reaction 3-methyl-2-oxobutanoate + (6R)-5,10-methylene-5,6,7,8-tetrahydrofolate + H2O = 2-dehydropantoate + (6S)-5,6,7,8-tetrahydrofolate. The protein operates within cofactor biosynthesis; (R)-pantothenate biosynthesis; (R)-pantoate from 3-methyl-2-oxobutanoate: step 1/2. Functionally, catalyzes the reversible reaction in which hydroxymethyl group from 5,10-methylenetetrahydrofolate is transferred onto alpha-ketoisovalerate to form ketopantoate. The protein is 3-methyl-2-oxobutanoate hydroxymethyltransferase of Geobacillus thermodenitrificans (strain NG80-2).